A 413-amino-acid polypeptide reads, in one-letter code: RNA-binding protein 41 (413 aa).

The segment covering 223–235 has biased composition (polar residues); sequence SVGDSGTAESPSL. The segment at 223–247 is disordered; that stretch reads SVGDSGTAESPSLLQDKGKQAAQGK. Serine 232 is modified (phosphoserine). Positions 309-387 constitute an RRM domain; sequence KVLYLKNLSP…KILVIEFGKN (79 aa).

In terms of biological role, may bind RNA. This is RNA-binding protein 41 (RBM41) from Homo sapiens (Human).